Consider the following 444-residue polypeptide: Cop9 signalosome complex subunit 11 (444 aa).

The region spanning Phe-195–Gln-367 is the PCI domain. The tract at residues Ser-419 to Gly-439 is disordered.

In terms of assembly, component of a COP9 signalosome-like (CSN) complex, composed of RRI1/CSN5, CSN9, RRI2/CSN10, PCI8/CSN11, CSN12 and CSI1. Interacts with PRT1 and RPG1, 2 subunits of the core complex of translation initiation factor 3 (eIF3).

It localises to the cytoplasm. The protein resides in the nucleus. In terms of biological role, component of the COP9 signalosome (CSN) complex that acts as an regulator of the ubiquitin (Ubl) conjugation pathway by mediating the deneddylation of the cullin subunit of SCF-type E3 ubiquitin-protein ligase complexes The CSN complex is involved in the regulation of the mating pheromone response. PCI8 may also be involved in transcriptional and translational control. In Saccharomyces cerevisiae (strain ATCC 204508 / S288c) (Baker's yeast), this protein is Cop9 signalosome complex subunit 11 (PCI8).